A 335-amino-acid chain; its full sequence is MNFKKLPKIELHCHLDGSLRVDTILDIAKKDNIPLPSYNKKELINYVSIMDDCNSLDEYLNKFFIPNKVMQTKENLKRIAFELLEDVAADNVKYIEVRFAPLLHVEKGLNIEEIIESVLEGIKEAEKLYDIKGNLILGCMRNMDIPSAFEVVKKGAKFIGKGVVAIDLCAGEEPHFPGKYIEVLKLAKECGYRITIHAGEAGVGENVLEAINLLNAERIGHGIYIKDCAEAYKLVKEKNIPLEVCPTSNLHTKAFESYETHPFMDFLKDGIKVTINTDNMTVSNTTITKELEMLNKFCGLSIGDYKILYLNAVEASFASSETKKMLKSYVKEITG.

Zn(2+) is bound by residues His-12 and His-14. The substrate site is built by His-14 and Asp-16. His-197 is a Zn(2+) binding site. The Proton donor role is filled by Glu-200. Position 278 (Asp-278) interacts with Zn(2+).

This sequence belongs to the metallo-dependent hydrolases superfamily. Adenosine and AMP deaminases family. Adenosine deaminase subfamily. The cofactor is Zn(2+).

The catalysed reaction is adenosine + H2O + H(+) = inosine + NH4(+). It carries out the reaction 2'-deoxyadenosine + H2O + H(+) = 2'-deoxyinosine + NH4(+). Functionally, catalyzes the hydrolytic deamination of adenosine and 2-deoxyadenosine. This Clostridium botulinum (strain Langeland / NCTC 10281 / Type F) protein is Adenosine deaminase.